The following is a 1074-amino-acid chain: Phospholipase D1 (1074 aa).

The PX domain maps to 81-212 (IKAQVLEVER…TEFLDISQLS (132 aa)). The PH domain occupies 219–328 (PKGIEGMIMK…WGGAIEEFIQ (110 aa)). 2 S-palmitoyl cysteine lipidation sites follow: Cys-240 and Cys-241. The 28-residue stretch at 459–486 (YLWAHHEKLVIIDQSVAFVGGIDLAYGR) folds into the PLD phosphodiesterase 1 domain. Residues 463 to 928 (HHEKLVIIDQ…MLGKRDSEMA (466 aa)) form a catalytic region. Phosphoserine occurs at positions 499, 561, and 629. One can recognise a PLD phosphodiesterase 2 domain in the interval 891–918 (ELIYVHSKLLIADDNTVIIGSANINDRS).

This sequence belongs to the phospholipase D family. As to quaternary structure, interacts with PIP5K1B. Expressed abundantly in the pancreas and heart and at high levels in brain, placenta, spleen, uterus and small intestine.

It localises to the cytoplasm. It is found in the perinuclear region. The protein localises to the endoplasmic reticulum membrane. Its subcellular location is the golgi apparatus membrane. The protein resides in the late endosome membrane. It carries out the reaction a 1,2-diacyl-sn-glycero-3-phosphocholine + H2O = a 1,2-diacyl-sn-glycero-3-phosphate + choline + H(+). The enzyme catalyses ethanol + a 1,2-diacyl-sn-glycero-3-phosphocholine = 1,2-diacyl-sn-glycero-3-phosphoethanol + choline. The catalysed reaction is 1,2-dihexadecanoyl-sn-glycero-3-phosphocholine + H2O = 1,2-dihexadecanoyl-sn-glycero-3-phosphate + choline + H(+). Its activity is regulated as follows. Stimulated by phosphatidylinositol 4,5-bisphosphate and phosphatidylinositol 3,4,5-trisphosphate, activated by the phosphokinase C-alpha, by the ADP-ribosylation factor-1 (ARF-1), and to a lesser extent by GTP-binding proteins: RHO A, RAC-1 and CDC42. Inhibited by oleate. Its function is as follows. Function as phospholipase selective for phosphatidylcholine. Implicated as a critical step in numerous cellular pathways, including signal transduction, membrane trafficking, and the regulation of mitosis. May be involved in the regulation of perinuclear intravesicular membrane traffic. The polypeptide is Phospholipase D1 (Homo sapiens (Human)).